Consider the following 418-residue polypeptide: MLSPTNSISKTAPVPPQDSSKPVLISEEPQNQLLQKVARTALAVLLVVVTLGLILLFYSFSDLQSFPWCCQTRPSTKEQPTISIPVPLPSPPLAVPRPSTPPPPVISRPSTPPAPTPAISPPSTPSAPKPSTPPPLPPKAPKPVKTQEDLLPFVPEQVFVEMYEDMARRRIIEALVPAWDSDIIFKCLCYFHTLYQGLIPLETFPPATIFNFKQKIISILEDKKAVLRGEPIKGSLPICCSEENYRRHLQGTTLLPVFMWYHPTPKTLSDTMQTMKQLAIKGSVGASHWLLVIVDIQARRLVYFDSLYNYVMSPEDMKKDLQSFAQQLDQVYPAYDSQKFSVKIAAKEVIQKGSGSSCGAWCCQFLHWYLRDPFTDALNDLPVDSVERHENLASFVQACEAAVQDLPELFWPEAKALF.

The segment covering 1-10 (MLSPTNSISK) has biased composition (polar residues). Residues 1–23 (MLSPTNSISKTAPVPPQDSSKPV) are disordered. A helical membrane pass occupies residues 40–60 (TALAVLLVVVTLGLILLFYSF). Residues 72–144 (TRPSTKEQPT…PLPPKAPKPV (73 aa)) form a disordered region. Residues 86-141 (VPLPSPPLAVPRPSTPPPPVISRPSTPPAPTPAISPPSTPSAPKPSTPPPLPPKAP) are compositionally biased toward pro residues. Active-site residues include His-288, Asp-305, and Cys-358.

Belongs to the peptidase C48 family.

It localises to the secreted. Its subcellular location is the host cell. The protein resides in the membrane. Its function is as follows. Effector proteins function to alter host cell physiology and promote bacterial survival in host tissues. This protease possesses deubiquitinating and deneddylating activities. The sequence is that of Deubiquitinase and deneddylase Dub1 (cdu1) from Chlamydia trachomatis serovar B (strain TZ1A828/OT).